Here is a 98-residue protein sequence, read N- to C-terminus: Derivative of benzaldehyde biosynthesis cluster protein C (98 aa).

This sequence belongs to the YciI family.

Its pathway is secondary metabolite biosynthesis. Part of the gene cluster that mediates the biosynthesis of the antibiotic 2,4-dihydroxy-3-methyl-6-(2-oxopropyl)benzaldehyde (DHMBA) and its derivatives. The direct non-reducing polyketide synthase dbaI product is 2,4-dihydroxy-3-methyl-6-(2-oxopropyl)benzaldehyde (DHMBA), produced by condensation of one acetyl-CoA starter unit with 4 malonyl-CoA units and one methylation step. The FAD-dependent monooxygenase dbaH is responsible for the synthesis of yellow pigments derived from the oxidation of DHMBA. The roles of dbaB, C, E and F have still to be determined. The sequence is that of Derivative of benzaldehyde biosynthesis cluster protein C from Emericella nidulans (strain FGSC A4 / ATCC 38163 / CBS 112.46 / NRRL 194 / M139) (Aspergillus nidulans).